Consider the following 29-residue polypeptide: Varv peptide E (29 aa).

The segment at residues 1 to 29 (GLPICGETCVGGTCNTPGCSCSWPVCTRN) is a cross-link (cyclopeptide (Gly-Asn)). 3 disulfide bridges follow: cysteine 5/cysteine 19, cysteine 9/cysteine 21, and cysteine 14/cysteine 26.

This is a cyclic peptide.

Functionally, probably participates in a plant defense mechanism. Has cytotoxic activity against human lymphoma U-937 GTB and human myeloma RPMI-8226/s cell lines. The chain is Varv peptide E from Viola arvensis (European field pansy).